A 180-amino-acid chain; its full sequence is Crossover junction endodeoxyribonuclease RuvC (180 aa).

Catalysis depends on residues aspartate 7, glutamate 66, and aspartate 138. Positions 7, 66, and 138 each coordinate Mg(2+).

It belongs to the RuvC family. As to quaternary structure, homodimer which binds Holliday junction (HJ) DNA. The HJ becomes 2-fold symmetrical on binding to RuvC with unstacked arms; it has a different conformation from HJ DNA in complex with RuvA. In the full resolvosome a probable DNA-RuvA(4)-RuvB(12)-RuvC(2) complex forms which resolves the HJ. The cofactor is Mg(2+).

The protein resides in the cytoplasm. The catalysed reaction is Endonucleolytic cleavage at a junction such as a reciprocal single-stranded crossover between two homologous DNA duplexes (Holliday junction).. Its function is as follows. The RuvA-RuvB-RuvC complex processes Holliday junction (HJ) DNA during genetic recombination and DNA repair. Endonuclease that resolves HJ intermediates. Cleaves cruciform DNA by making single-stranded nicks across the HJ at symmetrical positions within the homologous arms, yielding a 5'-phosphate and a 3'-hydroxyl group; requires a central core of homology in the junction. The consensus cleavage sequence is 5'-(A/T)TT(C/G)-3'. Cleavage occurs on the 3'-side of the TT dinucleotide at the point of strand exchange. HJ branch migration catalyzed by RuvA-RuvB allows RuvC to scan DNA until it finds its consensus sequence, where it cleaves and resolves the cruciform DNA. This Burkholderia thailandensis (strain ATCC 700388 / DSM 13276 / CCUG 48851 / CIP 106301 / E264) protein is Crossover junction endodeoxyribonuclease RuvC.